Consider the following 290-residue polypeptide: Bifunctional protein FolD (290 aa).

NADP(+) contacts are provided by residues 166 to 168 (GQS), serine 191, and isoleucine 232.

It belongs to the tetrahydrofolate dehydrogenase/cyclohydrolase family. In terms of assembly, homodimer.

The enzyme catalyses (6R)-5,10-methylene-5,6,7,8-tetrahydrofolate + NADP(+) = (6R)-5,10-methenyltetrahydrofolate + NADPH. The catalysed reaction is (6R)-5,10-methenyltetrahydrofolate + H2O = (6R)-10-formyltetrahydrofolate + H(+). Its pathway is one-carbon metabolism; tetrahydrofolate interconversion. In terms of biological role, catalyzes the oxidation of 5,10-methylenetetrahydrofolate to 5,10-methenyltetrahydrofolate and then the hydrolysis of 5,10-methenyltetrahydrofolate to 10-formyltetrahydrofolate. The polypeptide is Bifunctional protein FolD (Halorhodospira halophila (strain DSM 244 / SL1) (Ectothiorhodospira halophila (strain DSM 244 / SL1))).